The following is a 978-amino-acid chain: Alanine--tRNA ligase, chloroplastic/mitochondrial (978 aa).

4 residues coordinate Zn(2+): His-655, His-659, Cys-758, and His-762. Lys-773 is covalently cross-linked (Glycyl lysine isopeptide (Lys-Gly) (interchain with G-Cter in ubiquitin)).

The protein belongs to the class-II aminoacyl-tRNA synthetase family. In terms of assembly, monomer. It depends on Zn(2+) as a cofactor.

It localises to the plastid. Its subcellular location is the chloroplast. The protein localises to the mitochondrion. It carries out the reaction tRNA(Ala) + L-alanine + ATP = L-alanyl-tRNA(Ala) + AMP + diphosphate. Functionally, catalyzes the attachment of alanine to tRNA(Ala) in a two-step reaction: alanine is first activated by ATP to form Ala-AMP and then transferred to the acceptor end of tRNA(Ala). Also edits incorrectly charged tRNA(Ala) via its editing domain. This Arabidopsis thaliana (Mouse-ear cress) protein is Alanine--tRNA ligase, chloroplastic/mitochondrial (EMB86).